We begin with the raw amino-acid sequence, 130 residues long: MAQAQYTGTGRRKNAVARVRLVPGTGKITVNKKDVEEYIPHADLRLVINQPFAVTSTQGSYDVFVNVNGGGYGGQSGAIRHGIARALLQVDPDFRDSLKRAGLLTRDARMVERKKPGLKKARKASQFSKR.

The protein belongs to the universal ribosomal protein uS9 family.

The chain is Small ribosomal subunit protein uS9 from Streptococcus suis (strain 98HAH33).